A 187-amino-acid polypeptide reads, in one-letter code: Peptide deformylase (187 aa).

Residues Cys96 and His138 each contribute to the Fe cation site. Glu139 is an active-site residue. His142 is a binding site for Fe cation.

It belongs to the polypeptide deformylase family. The cofactor is Fe(2+).

It carries out the reaction N-terminal N-formyl-L-methionyl-[peptide] + H2O = N-terminal L-methionyl-[peptide] + formate. Removes the formyl group from the N-terminal Met of newly synthesized proteins. Requires at least a dipeptide for an efficient rate of reaction. N-terminal L-methionine is a prerequisite for activity but the enzyme has broad specificity at other positions. This Brachyspira hyodysenteriae (strain ATCC 49526 / WA1) protein is Peptide deformylase.